Here is a 725-residue protein sequence, read N- to C-terminus: Probable dipeptidyl-peptidase 5 (725 aa).

The signal sequence occupies residues 1–18 (MGALRWLSIAATASTALA). Residues N75, N96, N153, N258, N383, and N453 are each glycosylated (N-linked (GlcNAc...) asparagine). S563 acts as the Charge relay system in catalysis. N610 carries an N-linked (GlcNAc...) asparagine glycan. Active-site charge relay system residues include D646 and H678.

This sequence belongs to the peptidase S9C family.

The protein localises to the secreted. In terms of biological role, extracellular dipeptidyl-peptidase which removes N-terminal dipeptides sequentially from polypeptides having unsubstituted N-termini. The polypeptide is Probable dipeptidyl-peptidase 5 (dpp5) (Aspergillus flavus (strain ATCC 200026 / FGSC A1120 / IAM 13836 / NRRL 3357 / JCM 12722 / SRRC 167)).